Here is a 248-residue protein sequence, read N- to C-terminus: Pyridoxine 5'-phosphate synthase (248 aa).

Residue Asn12 participates in 3-amino-2-oxopropyl phosphate binding. 14–15 (DH) provides a ligand contact to 1-deoxy-D-xylulose 5-phosphate. Arg23 contacts 3-amino-2-oxopropyl phosphate. The active-site Proton acceptor is His48. The 1-deoxy-D-xylulose 5-phosphate site is built by Arg50 and His55. Glu75 (proton acceptor) is an active-site residue. Thr105 contacts 1-deoxy-D-xylulose 5-phosphate. The Proton donor role is filled by His196. 3-amino-2-oxopropyl phosphate contacts are provided by residues Gly197 and 218-219 (GH).

The protein belongs to the PNP synthase family. In terms of assembly, homooctamer; tetramer of dimers.

It localises to the cytoplasm. It catalyses the reaction 3-amino-2-oxopropyl phosphate + 1-deoxy-D-xylulose 5-phosphate = pyridoxine 5'-phosphate + phosphate + 2 H2O + H(+). It functions in the pathway cofactor biosynthesis; pyridoxine 5'-phosphate biosynthesis; pyridoxine 5'-phosphate from D-erythrose 4-phosphate: step 5/5. In terms of biological role, catalyzes the complicated ring closure reaction between the two acyclic compounds 1-deoxy-D-xylulose-5-phosphate (DXP) and 3-amino-2-oxopropyl phosphate (1-amino-acetone-3-phosphate or AAP) to form pyridoxine 5'-phosphate (PNP) and inorganic phosphate. The sequence is that of Pyridoxine 5'-phosphate synthase from Azotobacter vinelandii (strain DJ / ATCC BAA-1303).